The primary structure comprises 225 residues: UPF0758 protein BAV2405 (225 aa).

The MPN domain maps to 103 to 225 (AMKHPEEVRR…ALSMAERGLI (123 aa)). Residues His174, His176, and Asp187 each coordinate Zn(2+). A JAMM motif motif is present at residues 174–187 (HNHPSGNPQPSAAD).

This sequence belongs to the UPF0758 family.

This Bordetella avium (strain 197N) protein is UPF0758 protein BAV2405.